A 204-amino-acid polypeptide reads, in one-letter code: Imidazole glycerol phosphate synthase subunit HisH (204 aa).

The Glutamine amidotransferase type-1 domain maps to 1–204; it reads MIKIVDYGLG…MTLLKNFSEI (204 aa). C80 acts as the Nucleophile in catalysis. Catalysis depends on residues H186 and E188.

Heterodimer of HisH and HisF.

The protein localises to the cytoplasm. The enzyme catalyses 5-[(5-phospho-1-deoxy-D-ribulos-1-ylimino)methylamino]-1-(5-phospho-beta-D-ribosyl)imidazole-4-carboxamide + L-glutamine = D-erythro-1-(imidazol-4-yl)glycerol 3-phosphate + 5-amino-1-(5-phospho-beta-D-ribosyl)imidazole-4-carboxamide + L-glutamate + H(+). The catalysed reaction is L-glutamine + H2O = L-glutamate + NH4(+). Its pathway is amino-acid biosynthesis; L-histidine biosynthesis; L-histidine from 5-phospho-alpha-D-ribose 1-diphosphate: step 5/9. Its function is as follows. IGPS catalyzes the conversion of PRFAR and glutamine to IGP, AICAR and glutamate. The HisH subunit catalyzes the hydrolysis of glutamine to glutamate and ammonia as part of the synthesis of IGP and AICAR. The resulting ammonia molecule is channeled to the active site of HisF. The protein is Imidazole glycerol phosphate synthase subunit HisH of Bdellovibrio bacteriovorus (strain ATCC 15356 / DSM 50701 / NCIMB 9529 / HD100).